Here is a 422-residue protein sequence, read N- to C-terminus: Serine hydroxymethyltransferase (422 aa).

(6S)-5,6,7,8-tetrahydrofolate is bound by residues Leu118 and 122 to 124 (GHL). N6-(pyridoxal phosphate)lysine is present on Lys227. A (6S)-5,6,7,8-tetrahydrofolate-binding site is contributed by Glu242.

It belongs to the SHMT family. In terms of assembly, homodimer. It depends on pyridoxal 5'-phosphate as a cofactor.

It localises to the cytoplasm. The enzyme catalyses (6R)-5,10-methylene-5,6,7,8-tetrahydrofolate + glycine + H2O = (6S)-5,6,7,8-tetrahydrofolate + L-serine. Its pathway is one-carbon metabolism; tetrahydrofolate interconversion. It participates in amino-acid biosynthesis; glycine biosynthesis; glycine from L-serine: step 1/1. Its function is as follows. Catalyzes the reversible interconversion of serine and glycine with tetrahydrofolate (THF) serving as the one-carbon carrier. This reaction serves as the major source of one-carbon groups required for the biosynthesis of purines, thymidylate, methionine, and other important biomolecules. Also exhibits THF-independent aldolase activity toward beta-hydroxyamino acids, producing glycine and aldehydes, via a retro-aldol mechanism. This chain is Serine hydroxymethyltransferase, found in Sulfurihydrogenibium sp. (strain YO3AOP1).